A 220-amino-acid chain; its full sequence is Probable GTP-binding protein EngB (220 aa).

One can recognise an EngB-type G domain in the interval 26 to 200 (EGIEIAFAGR…RAKLDEWYAP (175 aa)). Residues 34–41 (GRSNTGKS), 61–65 (GRTQL), 79–82 (DLPG), 146–149 (TKAD), and 179–181 (FSS) contribute to the GTP site. Mg(2+) is bound by residues Ser-41 and Thr-63.

The protein belongs to the TRAFAC class TrmE-Era-EngA-EngB-Septin-like GTPase superfamily. EngB GTPase family. It depends on Mg(2+) as a cofactor.

Functionally, necessary for normal cell division and for the maintenance of normal septation. This chain is Probable GTP-binding protein EngB, found in Vibrio cholerae serotype O1 (strain ATCC 39541 / Classical Ogawa 395 / O395).